The following is a 150-amino-acid chain: D-aminoacyl-tRNA deacylase (150 aa).

The short motif at Gly138–Pro139 is the Gly-cisPro motif, important for rejection of L-amino acids element.

This sequence belongs to the DTD family. In terms of assembly, homodimer.

The protein localises to the cytoplasm. It catalyses the reaction glycyl-tRNA(Ala) + H2O = tRNA(Ala) + glycine + H(+). It carries out the reaction a D-aminoacyl-tRNA + H2O = a tRNA + a D-alpha-amino acid + H(+). An aminoacyl-tRNA editing enzyme that deacylates mischarged D-aminoacyl-tRNAs. Also deacylates mischarged glycyl-tRNA(Ala), protecting cells against glycine mischarging by AlaRS. Acts via tRNA-based rather than protein-based catalysis; rejects L-amino acids rather than detecting D-amino acids in the active site. By recycling D-aminoacyl-tRNA to D-amino acids and free tRNA molecules, this enzyme counteracts the toxicity associated with the formation of D-aminoacyl-tRNA entities in vivo and helps enforce protein L-homochirality. In Natranaerobius thermophilus (strain ATCC BAA-1301 / DSM 18059 / JW/NM-WN-LF), this protein is D-aminoacyl-tRNA deacylase.